We begin with the raw amino-acid sequence, 368 residues long: Putative J domain-containing protein R445 (368 aa).

The J domain occupies 13–83; that stretch reads DLYKILGLTN…KQRNEYNQRL (71 aa).

This is Putative J domain-containing protein R445 from Acanthamoeba polyphaga mimivirus (APMV).